Consider the following 233-residue polypeptide: Large ribosomal subunit protein uL1 (233 aa).

Belongs to the universal ribosomal protein uL1 family. In terms of assembly, part of the 50S ribosomal subunit.

In terms of biological role, binds directly to 23S rRNA. The L1 stalk is quite mobile in the ribosome, and is involved in E site tRNA release. Protein L1 is also a translational repressor protein, it controls the translation of the L11 operon by binding to its mRNA. This chain is Large ribosomal subunit protein uL1, found in Shewanella piezotolerans (strain WP3 / JCM 13877).